Here is a 500-residue protein sequence, read N- to C-terminus: Glycerol kinase (500 aa).

ADP is bound at residue Thr13. The ATP site is built by Thr13, Thr14, and Ser15. Sn-glycerol 3-phosphate is bound at residue Thr13. Arg17 contacts ADP. Residues Arg83, Glu84, Tyr135, and Asp245 each coordinate sn-glycerol 3-phosphate. The glycerol site is built by Arg83, Glu84, Tyr135, Asp245, and Gln246. ADP contacts are provided by Thr267 and Gly310. Thr267, Gly310, Gln314, and Gly411 together coordinate ATP. ADP-binding residues include Gly411 and Asn415.

This sequence belongs to the FGGY kinase family. In terms of assembly, homotetramer and homodimer (in equilibrium).

It carries out the reaction glycerol + ATP = sn-glycerol 3-phosphate + ADP + H(+). It participates in polyol metabolism; glycerol degradation via glycerol kinase pathway; sn-glycerol 3-phosphate from glycerol: step 1/1. Its activity is regulated as follows. Activated by phosphorylation and inhibited by fructose 1,6-bisphosphate (FBP). Functionally, key enzyme in the regulation of glycerol uptake and metabolism. Catalyzes the phosphorylation of glycerol to yield sn-glycerol 3-phosphate. The sequence is that of Glycerol kinase from Carboxydothermus hydrogenoformans (strain ATCC BAA-161 / DSM 6008 / Z-2901).